Reading from the N-terminus, the 50-residue chain is Cuticle protein CP498 (50 aa).

A run of 2 repeats spans residues alanine 6–leucine 23 and isoleucine 30–tyrosine 47.

In terms of tissue distribution, calcified shell.

In Cancer pagurus (Rock crab), this protein is Cuticle protein CP498.